The primary structure comprises 120 residues: Large ribosomal subunit protein uL18 (120 aa).

This sequence belongs to the universal ribosomal protein uL18 family. Part of the 50S ribosomal subunit; part of the 5S rRNA/L5/L18/L25 subcomplex. Contacts the 5S and 23S rRNAs.

This is one of the proteins that bind and probably mediate the attachment of the 5S RNA into the large ribosomal subunit, where it forms part of the central protuberance. This chain is Large ribosomal subunit protein uL18, found in Rhodopseudomonas palustris (strain BisB5).